A 260-amino-acid polypeptide reads, in one-letter code: MRAPLWLRDLAGAWIFYSVLPAWPGLKPRFERIARFAPWIGLVLGGLQSFLWLVLIRADWPTSAVTLLVIGLGAWLSGGLHLDGLMDTADGLAAGRERCLQAMDDSCVGASGVQALLVVVLLQIASLLRLGSLAPLALLIAAFWGRCAPLWAMARFFYLREGQAGTASFHRRYRKGWQEALPACLVLLLALTVVPSLMIVGWPSQMVLMAGIGVGVLPAFLVPELLGRRLGGHSGDSYGASVVLVETITLLLLAVLLPAG.

8 consecutive transmembrane segments (helical) span residues alanine 3–tryptophan 23, phenylalanine 36–isoleucine 56, tryptophan 60–leucine 80, valine 108–leucine 128, leucine 133–methionine 153, alanine 180–valine 200, methionine 206–leucine 226, and glycine 239–alanine 259.

It belongs to the CobS family. It depends on Mg(2+) as a cofactor.

It localises to the cell inner membrane. It carries out the reaction alpha-ribazole + adenosylcob(III)inamide-GDP = adenosylcob(III)alamin + GMP + H(+). The catalysed reaction is alpha-ribazole 5'-phosphate + adenosylcob(III)inamide-GDP = adenosylcob(III)alamin 5'-phosphate + GMP + H(+). It participates in cofactor biosynthesis; adenosylcobalamin biosynthesis; adenosylcobalamin from cob(II)yrinate a,c-diamide: step 7/7. Joins adenosylcobinamide-GDP and alpha-ribazole to generate adenosylcobalamin (Ado-cobalamin). Also synthesizes adenosylcobalamin 5'-phosphate from adenosylcobinamide-GDP and alpha-ribazole 5'-phosphate. This chain is Adenosylcobinamide-GDP ribazoletransferase, found in Prochlorococcus marinus (strain MIT 9313).